The sequence spans 293 residues: Small ribosomal subunit protein uS5 (293 aa).

Positions 1-56 are disordered; it reads MADDAGAAGGPGGPGGPGMGGRGGFRGGFGSGVRGRGRGRGRGRGRGRGARGGKAE. The residue at position 2 (A2) is an N-acetylalanine. Over residues 7 to 34 the composition is skewed to gly residues; that stretch reads AAGGPGGPGGPGMGGRGGFRGGFGSGVR. The span at 35–51 shows a compositional bias: basic residues; sequence GRGRGRGRGRGRGRGAR. Glycyl lysine isopeptide (Lys-Gly) (interchain with G-Cter in ubiquitin) cross-links involve residues K54 and K58. Positions 102 to 165 constitute an S5 DRBM domain; that stretch reads LKDEVLKIMP…ILAKLSIVPV (64 aa). T252 is modified (phosphothreonine). K263 is modified (N6-acetyllysine). Position 264 is a phosphoserine (S264). T270 is modified (phosphothreonine). The residue at position 275 (K275) is an N6-acetyllysine; alternate. K275 is covalently cross-linked (Glycyl lysine isopeptide (Lys-Gly) (interchain with G-Cter in SUMO1); alternate). Residue K275 forms a Glycyl lysine isopeptide (Lys-Gly) (interchain with G-Cter in SUMO2); alternate linkage. K275 is covalently cross-linked (Glycyl lysine isopeptide (Lys-Gly) (interchain with G-Cter in ubiquitin); alternate). S281 carries the post-translational modification Phosphoserine.

This sequence belongs to the universal ribosomal protein uS5 family. Component of the small ribosomal subunit. Interacts with zinc finger protein ZNF277 (via zinc-finger domains); the interaction is direct; the interaction is extra-ribosomal. Interaction with ZNF277 competes with the binding of RPS2 to protein arginine methyltransferase PRMT3. Post-translationally, citrullinated by PADI4 in the Arg/Gly-rich region. Asymmetric arginine dimethylation by PRMT3 occurs at multiple sites in the Arg/Gly-rich region. In terms of processing, monoubiquitinated at Lys-54 and Lys-58 by RNF10 when a ribosome has stalled during translation, leading to its degradation by the proteasome. Deubiquitinated at Lys-54 and Lys-58 by USP10, preventing degradation by the proteasome and promoting 40S ribosome subunit recycling following ribosome dissociation.

It is found in the cytoplasm. Its subcellular location is the nucleus. The protein localises to the nucleolus. Its function is as follows. Component of the ribosome, a large ribonucleoprotein complex responsible for the synthesis of proteins in the cell. The small ribosomal subunit (SSU) binds messenger RNAs (mRNAs) and translates the encoded message by selecting cognate aminoacyl-transfer RNA (tRNA) molecules. The large subunit (LSU) contains the ribosomal catalytic site termed the peptidyl transferase center (PTC), which catalyzes the formation of peptide bonds, thereby polymerizing the amino acids delivered by tRNAs into a polypeptide chain. The nascent polypeptides leave the ribosome through a tunnel in the LSU and interact with protein factors that function in enzymatic processing, targeting, and the membrane insertion of nascent chains at the exit of the ribosomal tunnel. Plays a role in the assembly and function of the 40S ribosomal subunit. Mutations in this protein affects the control of translational fidelity. Involved in nucleolar processing of pre-18S ribosomal RNA and ribosome assembly. This Bos taurus (Bovine) protein is Small ribosomal subunit protein uS5 (RPS2).